The chain runs to 390 residues: Lipid-A-disaccharide synthase (390 aa).

It belongs to the LpxB family.

It catalyses the reaction a lipid X + a UDP-2-N,3-O-bis[(3R)-3-hydroxyacyl]-alpha-D-glucosamine = a lipid A disaccharide + UDP + H(+). Its pathway is bacterial outer membrane biogenesis; LPS lipid A biosynthesis. Condensation of UDP-2,3-diacylglucosamine and 2,3-diacylglucosamine-1-phosphate to form lipid A disaccharide, a precursor of lipid A, a phosphorylated glycolipid that anchors the lipopolysaccharide to the outer membrane of the cell. This is Lipid-A-disaccharide synthase from Haemophilus influenzae (strain 86-028NP).